The following is a 1127-amino-acid chain: Inactive phospholipase C-like protein 2 (1127 aa).

The span at 1 to 11 (MAECGRGGAAG) shows a compositional bias: gly residues. The disordered stretch occupies residues 1–128 (MAECGRGGAA…KKTVSFSSMP (128 aa)). Ala-2 is subject to N-acetylalanine. Phosphoserine is present on Ser-17. Residues 19 to 31 (GPALGAKGALKAG) are compositionally biased toward low complexity. Residues 32-42 (VGEGGGGGGRL) show a composition bias toward gly residues. The residue at position 84 (Thr-84) is a Phosphothreonine. One can recognise a PH domain in the interval 141–251 (NSMVEGSELK…WVTGLRYLIS (111 aa)). Residues 426–570 (QDMKQPLSHY…LKGKILIKAK (145 aa)) form the PI-PLC X-box domain. Thr-584 is modified (phosphothreonine). The PI-PLC Y-box domain maps to 618 to 734 (LSELVSICKS…GYVLRPAIMR (117 aa)). The 130-residue stretch at 734–863 (REEVSFFSAN…TGYRHVPLQS (130 aa)) folds into the C2 domain. Residues 1101–1127 (GTENADVQKPRRSLEVIPEKANDETGE) form a disordered region. Basic and acidic residues predominate over residues 1106–1127 (DVQKPRRSLEVIPEKANDETGE). A Phosphoserine modification is found at Ser-1113.

It is found in the cytoplasm. Its function is as follows. May play an role in the regulation of Ins(1,4,5)P3 around the endoplasmic reticulum. The sequence is that of Inactive phospholipase C-like protein 2 (PLCL2) from Homo sapiens (Human).